Reading from the N-terminus, the 279-residue chain is Thymidylate synthase (279 aa).

133-134 (RR) is a dUMP binding site. Residue Cys-154 is the Nucleophile of the active site. DUMP is bound by residues 178–181 (RSND), Asn-189, and 219–221 (HIY). Asp-181 serves as a coordination point for (6R)-5,10-methylene-5,6,7,8-tetrahydrofolate. Ala-278 is a binding site for (6R)-5,10-methylene-5,6,7,8-tetrahydrofolate.

This sequence belongs to the thymidylate synthase family. Bacterial-type ThyA subfamily. Homodimer.

It is found in the cytoplasm. The catalysed reaction is dUMP + (6R)-5,10-methylene-5,6,7,8-tetrahydrofolate = 7,8-dihydrofolate + dTMP. It participates in pyrimidine metabolism; dTTP biosynthesis. In terms of biological role, catalyzes the reductive methylation of 2'-deoxyuridine-5'-monophosphate (dUMP) to 2'-deoxythymidine-5'-monophosphate (dTMP) while utilizing 5,10-methylenetetrahydrofolate (mTHF) as the methyl donor and reductant in the reaction, yielding dihydrofolate (DHF) as a by-product. This enzymatic reaction provides an intracellular de novo source of dTMP, an essential precursor for DNA biosynthesis. This chain is Thymidylate synthase, found in Streptococcus pneumoniae (strain ATCC 700669 / Spain 23F-1).